A 236-amino-acid polypeptide reads, in one-letter code: MRQHVNPLSRFFQLPRPLPSPEEMFAQSSRPLHLDIGCARGGFLLGLAPLQPEWNHVGVEIRHPLVLSAERDRQELKLDNLRFLFCNVNVSLEEWLDALPRDQLQWVSIQFPDPWFKRRHQKRRVLQPSLLIALATALQPGRELFIQSDVLSVIEPMVMLIEQSNCFKRPGDDFHPWQRTNPMPVPTERERYVLDQGLQVYRRLYQRNDQQAPELSNLEALWQQVDNPSEEEHSDC.

4 residues coordinate S-adenosyl-L-methionine: Asp35, Glu60, Asn87, and Asp113. Asp113 is a catalytic residue. Substrate contacts are provided by Lys117 and Asp149.

This sequence belongs to the class I-like SAM-binding methyltransferase superfamily. TrmB family.

It catalyses the reaction guanosine(46) in tRNA + S-adenosyl-L-methionine = N(7)-methylguanosine(46) in tRNA + S-adenosyl-L-homocysteine. It participates in tRNA modification; N(7)-methylguanine-tRNA biosynthesis. Catalyzes the formation of N(7)-methylguanine at position 46 (m7G46) in tRNA. The sequence is that of tRNA (guanine-N(7)-)-methyltransferase from Prochlorococcus marinus (strain MIT 9303).